The following is a 317-amino-acid chain: Fe-S cluster assembly protein dre2 (317 aa).

An N-terminal SAM-like domain region spans residues 22 to 152; it reads PVQAKRTLLL…KPNFEPSAAV (131 aa). Residues 153–209 are linker; sequence PLKFGLKKKNKPTPTAVPSIPTGFAAPMGIDSPVTNHDRDEDDELINEDTLLSEEDL. [2Fe-2S] cluster contacts are provided by Cys-219, Cys-230, Cys-233, and Cys-235. The tract at residues 219 to 235 is fe-S binding site A; sequence CQPKTGRRRRACKDCTC. 4 residues coordinate [4Fe-4S] cluster: Cys-280, Cys-283, Cys-291, and Cys-294. Short sequence motifs (cx2C motif) lie at residues 280-283 and 291-294; these read CGSC and CDGC. The tract at residues 280–294 is fe-S binding site B; sequence CGSCALGDAFRCDGC.

Belongs to the anamorsin family. In terms of assembly, monomer. Interacts with tah18. Interacts with mia40. [2Fe-2S] cluster is required as a cofactor. It depends on [4Fe-4S] cluster as a cofactor.

The protein resides in the cytoplasm. The protein localises to the mitochondrion intermembrane space. Component of the cytosolic iron-sulfur (Fe-S) protein assembly (CIA) machinery required for the maturation of extramitochondrial Fe-S proteins. Part of an electron transfer chain functioning in an early step of cytosolic Fe-S biogenesis, facilitating the de novo assembly of a [4Fe-4S] cluster on the scaffold complex cfd1-nbp35. Electrons are transferred to dre2 from NADPH via the FAD- and FMN-containing protein tah18. Tah18-dre2 are also required for the assembly of the diferric tyrosyl radical cofactor of ribonucleotide reductase (RNR), probably by providing electrons for reduction during radical cofactor maturation in the catalytic small subunit rnr2. The polypeptide is Fe-S cluster assembly protein dre2 (Penicillium rubens (strain ATCC 28089 / DSM 1075 / NRRL 1951 / Wisconsin 54-1255) (Penicillium chrysogenum)).